The following is a 693-amino-acid chain: Polyribonucleotide nucleotidyltransferase (693 aa).

2 residues coordinate Mg(2+): D489 and D495. Residues 556 to 615 (PQIHVMNINPAKIKDVVGRGGATVKGIVEKTGAQIDTSDSGEVKVFAKDKKSMDMAVAMI) enclose the KH domain. Residues 625 to 693 (GQVYKGKIVK…GRVKLSLVAR (69 aa)) form the S1 motif domain.

It belongs to the polyribonucleotide nucleotidyltransferase family. Component of the RNA degradosome, which is a multiprotein complex involved in RNA processing and mRNA degradation. Mg(2+) is required as a cofactor.

It localises to the cytoplasm. The catalysed reaction is RNA(n+1) + phosphate = RNA(n) + a ribonucleoside 5'-diphosphate. Involved in mRNA degradation. Catalyzes the phosphorolysis of single-stranded polyribonucleotides processively in the 3'- to 5'-direction. In Francisella tularensis subsp. tularensis (strain FSC 198), this protein is Polyribonucleotide nucleotidyltransferase.